A 417-amino-acid chain; its full sequence is Carboxypeptidase A2 (417 aa).

Residues Met1 to Cys16 form the signal peptide. Positions Gln17–Arg112 are cleaved as a propeptide — activation peptide. One can recognise a Peptidase M14 domain in the interval Ala120–Val412. Positions 177 and 180 each coordinate Zn(2+). Substrate contacts are provided by residues His177–Glu180, Arg235, and Asn252–Arg253. A disulfide bridge connects residues Cys246 and Cys269. Zn(2+) is bound at residue His304. Ser305 to Tyr306 provides a ligand contact to substrate. The cysteines at positions 318 and 352 are disulfide-linked. Tyr356 is a binding site for substrate. The active-site Proton donor/acceptor is the Glu378.

Belongs to the peptidase M14 family. Requires Zn(2+) as cofactor.

The protein resides in the secreted. The enzyme catalyses Similar to that of carboxypeptidase A (EC 3.4.17.1), but with a preference for bulkier C-terminal residues.. Carboxypeptidase that catalyzes the release of a C-terminal amino acid, with a preference for large aromatic C-terminal residues. The sequence is that of Carboxypeptidase A2 (Cpa2) from Rattus norvegicus (Rat).